The primary structure comprises 393 residues: RNA pseudouridine synthase 7 (393 aa).

The 70-residue stretch at 49 to 118 folds into the S4 RNA-binding domain; that stretch reads KTIVDLFTDE…GDITILQNEA (70 aa). D162 is an active-site residue.

Belongs to the pseudouridine synthase RluA family.

The catalysed reaction is a uridine in RNA = a pseudouridine in RNA. This Oryza sativa subsp. japonica (Rice) protein is RNA pseudouridine synthase 7.